The chain runs to 99 residues: Plastocyanin (99 aa).

Residues Ile1–Asn99 form the Plastocyanin-like domain. Cu cation-binding residues include His37, Cys84, His87, and Met92.

This sequence belongs to the plastocyanin family. Cu(2+) serves as cofactor.

Its subcellular location is the plastid. The protein localises to the chloroplast thylakoid membrane. Its function is as follows. Participates in electron transfer between P700 and the cytochrome b6-f complex in photosystem I. The sequence is that of Plastocyanin (PETE) from Cucumis sativus (Cucumber).